We begin with the raw amino-acid sequence, 330 residues long: Aspartate--ammonia ligase (330 aa).

This sequence belongs to the class-II aminoacyl-tRNA synthetase family. AsnA subfamily.

Its subcellular location is the cytoplasm. The catalysed reaction is L-aspartate + NH4(+) + ATP = L-asparagine + AMP + diphosphate + H(+). It functions in the pathway amino-acid biosynthesis; L-asparagine biosynthesis; L-asparagine from L-aspartate (ammonia route): step 1/1. The sequence is that of Aspartate--ammonia ligase from Yersinia pseudotuberculosis serotype O:1b (strain IP 31758).